We begin with the raw amino-acid sequence, 155 residues long: 6,7-dimethyl-8-ribityllumazine synthase (155 aa).

Residues phenylalanine 24, 58–60 (AFE), and 82–84 (AVI) contribute to the 5-amino-6-(D-ribitylamino)uracil site. 87 to 88 (ST) provides a ligand contact to (2S)-2-hydroxy-3-oxobutyl phosphate. The active-site Proton donor is the histidine 90. Phenylalanine 115 contributes to the 5-amino-6-(D-ribitylamino)uracil binding site. Residue arginine 129 coordinates (2S)-2-hydroxy-3-oxobutyl phosphate.

Belongs to the DMRL synthase family.

The enzyme catalyses (2S)-2-hydroxy-3-oxobutyl phosphate + 5-amino-6-(D-ribitylamino)uracil = 6,7-dimethyl-8-(1-D-ribityl)lumazine + phosphate + 2 H2O + H(+). It functions in the pathway cofactor biosynthesis; riboflavin biosynthesis; riboflavin from 2-hydroxy-3-oxobutyl phosphate and 5-amino-6-(D-ribitylamino)uracil: step 1/2. Functionally, catalyzes the formation of 6,7-dimethyl-8-ribityllumazine by condensation of 5-amino-6-(D-ribitylamino)uracil with 3,4-dihydroxy-2-butanone 4-phosphate. This is the penultimate step in the biosynthesis of riboflavin. The chain is 6,7-dimethyl-8-ribityllumazine synthase from Acetivibrio thermocellus (strain ATCC 27405 / DSM 1237 / JCM 9322 / NBRC 103400 / NCIMB 10682 / NRRL B-4536 / VPI 7372) (Clostridium thermocellum).